The following is a 509-amino-acid chain: Dihydrolipoyl dehydrogenase, mitochondrial (509 aa).

Residues 1–35 (MQSWSRVYCSLAKKGHFNRLSHGLQGASSVPLRTY) constitute a mitochondrion transit peptide. Lys66 carries the N6-acetyllysine; alternate modification. Residue Lys66 is modified to N6-succinyllysine; alternate. FAD is bound by residues 71-80 (EKNETLGGTC) and Lys89. Cysteines 80 and 85 form a disulfide. N6-acetyllysine; alternate occurs at positions 104, 122, 132, and 143. Lys104, Lys122, Lys132, and Lys143 each carry N6-succinyllysine; alternate. Gly154 provides a ligand contact to FAD. Lys159 is modified (N6-succinyllysine). An FAD-binding site is contributed by 183 to 185 (TGS). Residues 220–227 (GAGVIGVE) and Glu243 each bind NAD(+). N6-succinyllysine is present on residues Lys273 and Lys277. Val278 is a binding site for NAD(+). Phosphoserine is present on residues Ser285 and Ser297. Residue Gly314 coordinates NAD(+). The residue at position 346 (Lys346) is an N6-acetyllysine. Residues Asp355 and 361–364 (MLAH) each bind FAD. Residue Lys410 is modified to N6-acetyllysine; alternate. The residue at position 410 (Lys410) is an N6-succinyllysine; alternate. N6-acetyllysine occurs at positions 417 and 420. Lys430 is modified (N6-succinyllysine). His487 serves as the catalytic Proton acceptor. Ser502 is subject to Phosphoserine. The residue at position 505 (Lys505) is an N6-acetyllysine; alternate. Lys505 is subject to N6-succinyllysine; alternate.

The protein belongs to the class-I pyridine nucleotide-disulfide oxidoreductase family. Homodimer. Part of the multimeric pyruvate dehydrogenase complex that contains multiple copies of pyruvate dehydrogenase (subunits PDHA (PDHA1 or PDHA2) and PDHB, E1), dihydrolipoamide acetyltransferase (DLAT, E2) and lipoamide dehydrogenase (DLD, E3). These subunits are bound to an inner core composed of about 48 DLAT and 12 PDHX molecules (by non covalent bonds). The 2-oxoglutarate dehydrogenase complex is composed of OGDH (2-oxoglutarate dehydrogenase; E1), DLST (dihydrolipoamide succinyltransferase; E2), DLD (dihydrolipoamide dehydrogenase; E3) and the assembly factor KGD4. It contains multiple copies of the three enzymatic components (E1, E2 and E3). In the nucleus, the 2-oxoglutarate dehydrogenase complex associates with KAT2A. Interacts with PDHX. FAD is required as a cofactor. In terms of processing, tyrosine phosphorylated.

The protein resides in the mitochondrion matrix. Its subcellular location is the nucleus. It is found in the cell projection. The protein localises to the cilium. It localises to the flagellum. The protein resides in the cytoplasmic vesicle. Its subcellular location is the secretory vesicle. It is found in the acrosome. The catalysed reaction is N(6)-[(R)-dihydrolipoyl]-L-lysyl-[protein] + NAD(+) = N(6)-[(R)-lipoyl]-L-lysyl-[protein] + NADH + H(+). Its function is as follows. Lipoamide dehydrogenase is a component of the glycine cleavage system as well as an E3 component of three alpha-ketoacid dehydrogenase complexes (pyruvate-, alpha-ketoglutarate-, and branched-chain amino acid-dehydrogenase complex). The 2-oxoglutarate dehydrogenase complex is mainly active in the mitochondrion. A fraction of the 2-oxoglutarate dehydrogenase complex also localizes in the nucleus and is required for lysine succinylation of histones: associates with KAT2A on chromatin and provides succinyl-CoA to histone succinyltransferase KAT2A. In monomeric form may have additional moonlighting function as serine protease. Involved in the hyperactivation of spermatazoa during capacitation and in the spermatazoal acrosome reaction. In Rattus norvegicus (Rat), this protein is Dihydrolipoyl dehydrogenase, mitochondrial (Dld).